We begin with the raw amino-acid sequence, 432 residues long: D-amino acid dehydrogenase (432 aa).

An FAD-binding site is contributed by 3–17 (VVILGSGVVGVTSAW).

The protein belongs to the DadA oxidoreductase family. Requires FAD as cofactor.

The catalysed reaction is a D-alpha-amino acid + A + H2O = a 2-oxocarboxylate + AH2 + NH4(+). It participates in amino-acid degradation; D-alanine degradation; NH(3) and pyruvate from D-alanine: step 1/1. Oxidative deamination of D-amino acids. This chain is D-amino acid dehydrogenase, found in Salmonella choleraesuis (strain SC-B67).